Consider the following 665-residue polypeptide: Ion-translocating oxidoreductase complex subunit C (665 aa).

4Fe-4S ferredoxin-type domains follow at residues 368-398 (EYAE…QQLY) and 408-437 (KSEE…IQYF). Residues Cys-378, Cys-381, Cys-384, Cys-388, Cys-417, Cys-420, Cys-423, and Cys-427 each contribute to the [4Fe-4S] cluster site. 2 stretches are compositionally biased toward basic and acidic residues: residues 465–477 (QARM…ERKA) and 485–513 (ARRE…KANE). 3 disordered regions span residues 465-568 (QARM…DAKK), 580-623 (AKKL…LDPK), and 637-665 (KKLA…QIVR). Composition is skewed to polar residues over residues 554–564 (VENQEQQTQPT) and 585–600 (QTNS…QTAE). The segment covering 602 to 615 (EVEKTKSAVEKTEE) has biased composition (basic and acidic residues). Over residues 643–656 (NSTSEAISNSQTAE) the composition is skewed to polar residues.

This sequence belongs to the 4Fe4S bacterial-type ferredoxin family. RnfC subfamily. The complex is composed of six subunits: RnfA, RnfB, RnfC, RnfD, RnfE and RnfG. [4Fe-4S] cluster is required as a cofactor.

The protein resides in the cell inner membrane. Part of a membrane-bound complex that couples electron transfer with translocation of ions across the membrane. This Haemophilus influenzae (strain 86-028NP) protein is Ion-translocating oxidoreductase complex subunit C.